A 175-amino-acid chain; its full sequence is Methylated-DNA--protein-cysteine methyltransferase (175 aa).

DNA contacts are provided by Tyr115 and Arg127. Cys144 (nucleophile; methyl group acceptor) is an active-site residue.

Belongs to the MGMT family.

The protein localises to the nucleus. It carries out the reaction a 6-O-methyl-2'-deoxyguanosine in DNA + L-cysteinyl-[protein] = S-methyl-L-cysteinyl-[protein] + a 2'-deoxyguanosine in DNA. The catalysed reaction is a 4-O-methyl-thymidine in DNA + L-cysteinyl-[protein] = a thymidine in DNA + S-methyl-L-cysteinyl-[protein]. Its function is as follows. Involved in the cellular defense against the biological effects of O6-methylguanine (O6-MeG) and O4-methylthymine (O4-MeT) in DNA. Repairs the methylated nucleobase in DNA by stoichiometrically transferring the methyl group to a cysteine residue in the enzyme. This is a suicide reaction: the enzyme is irreversibly inactivated. The polypeptide is Methylated-DNA--protein-cysteine methyltransferase (MGT1) (Candida albicans (strain SC5314 / ATCC MYA-2876) (Yeast)).